A 621-amino-acid chain; its full sequence is 1-deoxy-D-xylulose-5-phosphate synthase (621 aa).

Residues His80 and 121–123 (GHS) contribute to the thiamine diphosphate site. Position 152 (Asp152) interacts with Mg(2+). Residues 153–154 (GA), Asn181, Tyr288, and Glu370 contribute to the thiamine diphosphate site. Asn181 serves as a coordination point for Mg(2+).

The protein belongs to the transketolase family. DXPS subfamily. As to quaternary structure, homodimer. The cofactor is Mg(2+). Requires thiamine diphosphate as cofactor.

The enzyme catalyses D-glyceraldehyde 3-phosphate + pyruvate + H(+) = 1-deoxy-D-xylulose 5-phosphate + CO2. Its pathway is metabolic intermediate biosynthesis; 1-deoxy-D-xylulose 5-phosphate biosynthesis; 1-deoxy-D-xylulose 5-phosphate from D-glyceraldehyde 3-phosphate and pyruvate: step 1/1. Functionally, catalyzes the acyloin condensation reaction between C atoms 2 and 3 of pyruvate and glyceraldehyde 3-phosphate to yield 1-deoxy-D-xylulose-5-phosphate (DXP). In Edwardsiella ictaluri (strain 93-146), this protein is 1-deoxy-D-xylulose-5-phosphate synthase.